A 278-amino-acid chain; its full sequence is HTH-type transcriptional regulator HdfR (278 aa).

The region spanning 1 to 58 (MDTELLKTFLEVSRTRHFGRAAEALYLTQSAVSFRIRQLENQLGVNLFTRHRNNIRLT) is the HTH lysR-type domain. The H-T-H motif DNA-binding region spans 18–37 (FGRAAEALYLTQSAVSFRIR).

It belongs to the LysR transcriptional regulatory family.

Negatively regulates the transcription of the flagellar master operon flhDC by binding to the upstream region of the operon. This chain is HTH-type transcriptional regulator HdfR, found in Salmonella dublin (strain CT_02021853).